Consider the following 320-residue polypeptide: tRNA pseudouridine synthase B (320 aa).

The Nucleophile role is filled by D49.

It belongs to the pseudouridine synthase TruB family. Type 1 subfamily.

The enzyme catalyses uridine(55) in tRNA = pseudouridine(55) in tRNA. In terms of biological role, responsible for synthesis of pseudouridine from uracil-55 in the psi GC loop of transfer RNAs. The chain is tRNA pseudouridine synthase B from Bartonella bacilliformis (strain ATCC 35685 / KC583 / Herrer 020/F12,63).